Consider the following 642-residue polypeptide: Threonine--tRNA ligase (642 aa).

In terms of domain architecture, TGS spans 1–61 (MPVITLPDGS…DTDAQLAIIT (61 aa)). The catalytic stretch occupies residues 243–534 (DHRKIGKQLD…LTEEFAGFFP (292 aa)). Zn(2+) is bound by residues Cys334, His385, and His511.

This sequence belongs to the class-II aminoacyl-tRNA synthetase family. In terms of assembly, homodimer. Zn(2+) is required as a cofactor.

Its subcellular location is the cytoplasm. It catalyses the reaction tRNA(Thr) + L-threonine + ATP = L-threonyl-tRNA(Thr) + AMP + diphosphate + H(+). In terms of biological role, catalyzes the attachment of threonine to tRNA(Thr) in a two-step reaction: L-threonine is first activated by ATP to form Thr-AMP and then transferred to the acceptor end of tRNA(Thr). Also edits incorrectly charged L-seryl-tRNA(Thr). This is Threonine--tRNA ligase from Pectobacterium carotovorum subsp. carotovorum (strain PC1).